We begin with the raw amino-acid sequence, 223 residues long: Deoxyribose-phosphate aldolase (223 aa).

Asp-91 acts as the Proton donor/acceptor in catalysis. Residue Lys-153 is the Schiff-base intermediate with acetaldehyde of the active site. The Proton donor/acceptor role is filled by Lys-182.

This sequence belongs to the DeoC/FbaB aldolase family. DeoC type 1 subfamily.

The protein resides in the cytoplasm. The enzyme catalyses 2-deoxy-D-ribose 5-phosphate = D-glyceraldehyde 3-phosphate + acetaldehyde. It participates in carbohydrate degradation; 2-deoxy-D-ribose 1-phosphate degradation; D-glyceraldehyde 3-phosphate and acetaldehyde from 2-deoxy-alpha-D-ribose 1-phosphate: step 2/2. Its function is as follows. Catalyzes a reversible aldol reaction between acetaldehyde and D-glyceraldehyde 3-phosphate to generate 2-deoxy-D-ribose 5-phosphate. The chain is Deoxyribose-phosphate aldolase from Streptococcus pyogenes serotype M4 (strain MGAS10750).